A 395-amino-acid polypeptide reads, in one-letter code: DDB1- and CUL4-associated factor 4-like protein 2 (395 aa).

WD repeat units lie at residues 268 to 307 (SHDS…CVTQ) and 312 to 351 (VNNS…LLTT).

This Homo sapiens (Human) protein is DDB1- and CUL4-associated factor 4-like protein 2 (DCAF4L2).